A 553-amino-acid chain; its full sequence is HTH-type transcriptional regulator SgrR (553 aa).

Residues 1-117 (MPSSRLQQQF…LSQIERRFRQ (117 aa)) enclose the HTH marR-type domain. The segment at residues 26-49 (LQELANVLHCSKRHIRSLLNNMQK) is a DNA-binding region (H-T-H motif). Residues 163 to 494 (EPEADLAHHW…NDLSKEVSQW (332 aa)) form a solute-binding region.

Functionally, activates the small RNA gene sgrS under glucose-phosphate stress conditions as well as yfdZ. Represses its own transcription under both stress and non-stress conditions. Might act as a sensor of the intracellular accumulation of phosphoglucose by binding these molecules in its C-terminal solute-binding domain. In Photorhabdus laumondii subsp. laumondii (strain DSM 15139 / CIP 105565 / TT01) (Photorhabdus luminescens subsp. laumondii), this protein is HTH-type transcriptional regulator SgrR.